A 189-amino-acid chain; its full sequence is Peptidyl-tRNA hydrolase (189 aa).

Tyr16 contributes to the tRNA binding site. The active-site Proton acceptor is His21. TRNA-binding residues include Phe67, Asn69, and Asn115.

The protein belongs to the PTH family. In terms of assembly, monomer.

It localises to the cytoplasm. It catalyses the reaction an N-acyl-L-alpha-aminoacyl-tRNA + H2O = an N-acyl-L-amino acid + a tRNA + H(+). Functionally, hydrolyzes ribosome-free peptidyl-tRNAs (with 1 or more amino acids incorporated), which drop off the ribosome during protein synthesis, or as a result of ribosome stalling. Catalyzes the release of premature peptidyl moieties from peptidyl-tRNA molecules trapped in stalled 50S ribosomal subunits, and thus maintains levels of free tRNAs and 50S ribosomes. The polypeptide is Peptidyl-tRNA hydrolase (Legionella pneumophila (strain Lens)).